The following is a 526-amino-acid chain: Reelin domain-containing protein 1 (526 aa).

A signal peptide spans 1 to 23; it reads MRMQAALVGWACTTLCLASCSSA. Residues 24–179 enclose the Reelin domain; the sequence is FSHGASTVAC…SAHSDDRMEP (156 aa). Over 24-443 the chain is Extracellular; that stretch reads FSHGASTVAC…PLGIQLRTPQ (420 aa). 3 disordered regions span residues 242–272, 294–336, and 370–398; these read DAET…PTLE, FASS…TVTQ, and LQTS…LPQS. The segment covering 245-271 has biased composition (polar residues); sequence TLSQPSSHTATEGSINQQPSGDSNPTL. Residues 385-396 are compositionally biased toward polar residues; that stretch reads SEASRASASFLP. Residues 444–462 traverse the membrane as a helical segment; sequence LGILLCLSATLGMALAAGL. Over 463–526 the chain is Cytoplasmic; that stretch reads RYLHTQYCHQ…PSVGSKKTVL (64 aa).

The protein localises to the membrane. This chain is Reelin domain-containing protein 1, found in Homo sapiens (Human).